Reading from the N-terminus, the 71-residue chain is Beta-defensin 124 (71 aa).

An N-terminal signal peptide occupies residues 1–22 (MTQLLLFLVALLVLGHVPSGRS). Cystine bridges form between Cys27/Cys54, Cys34/Cys48, and Cys38/Cys55.

The protein belongs to the beta-defensin family.

The protein resides in the secreted. Functionally, has antibacterial activity. This is Beta-defensin 124 (DEFB124) from Pan troglodytes (Chimpanzee).